The following is a 332-amino-acid chain: 3-ketodihydrosphingosine reductase (332 aa).

The N-terminal stretch at Met1 to Pro25 is a signal peptide. Residues Lys26–Ser269 are Cytoplasmic-facing. Positions 39, 41, 42, 43, 64, 68, and 93 each coordinate NADPH. Residues Gly39 to Gly43 carry the GXSXG motif. Catalysis depends on Ser172, which acts as the Proton donor. The active-site Proton acceptor is Tyr186. Residues Tyr186 and Lys190 each coordinate NADP(+). Lys190 functions as the Lowers pKa of active site Tyr in the catalytic mechanism. A helical membrane pass occupies residues Asp270–Gly290. Residues Leu291–Gln292 lie on the Lumenal side of the membrane. The chain crosses the membrane as a helical span at residues Gln293–Ser313. Topologically, residues Ile314–Thr331 are cytoplasmic.

This sequence belongs to the short-chain dehydrogenases/reductases (SDR) family.

The protein localises to the endoplasmic reticulum membrane. It catalyses the reaction sphinganine + NADP(+) = 3-oxosphinganine + NADPH + H(+). Its pathway is lipid metabolism; sphingolipid metabolism. Its function is as follows. Catalyzes the reduction of 3'-oxosphinganine (3-ketodihydrosphingosine/KDS) to sphinganine (dihydrosphingosine/DHS), the second step of de novo sphingolipid biosynthesis. The polypeptide is 3-ketodihydrosphingosine reductase (KDSR) (Bos taurus (Bovine)).